Reading from the N-terminus, the 228-residue chain is Small ribosomal subunit protein uS3 (228 aa).

The 69-residue stretch at 39–107 (TREYLQDKLK…PVHINIEEIR (69 aa)) folds into the KH type-2 domain.

The protein belongs to the universal ribosomal protein uS3 family. In terms of assembly, part of the 30S ribosomal subunit. Forms a tight complex with proteins S10 and S14.

Binds the lower part of the 30S subunit head. Binds mRNA in the 70S ribosome, positioning it for translation. This chain is Small ribosomal subunit protein uS3, found in Pseudomonas entomophila (strain L48).